The sequence spans 134 residues: MRSVLTISASLLFGLALSSVAHANDHKILGVIAMPRNETNDLTLKTPVCRIVKRIQLTADHGDIELSGASVYFKTARSASQSLNVPSSIKEGQTTGWININSDNDNKRCVSKITFSGHTVNSSDMARLKVIGDD.

The signal sequence occupies residues 1–23 (MRSVLTISASLLFGLALSSVAHA).

The protein belongs to the UPF0412 family.

This chain is UPF0412 protein YaaI, found in Salmonella paratyphi B (strain ATCC BAA-1250 / SPB7).